The sequence spans 506 residues: Glutamate--tRNA ligase (506 aa).

The 'HIGH' region signature appears at 23 to 33 (PSPTGTPHVGL). The 'KMSKS' region signature appears at 267–271 (KLSKR). Residue lysine 270 coordinates ATP.

Belongs to the class-I aminoacyl-tRNA synthetase family. Glutamate--tRNA ligase type 1 subfamily. As to quaternary structure, monomer.

The protein resides in the cytoplasm. The enzyme catalyses tRNA(Glu) + L-glutamate + ATP = L-glutamyl-tRNA(Glu) + AMP + diphosphate. Functionally, catalyzes the attachment of glutamate to tRNA(Glu) in a two-step reaction: glutamate is first activated by ATP to form Glu-AMP and then transferred to the acceptor end of tRNA(Glu). The sequence is that of Glutamate--tRNA ligase from Clavibacter michiganensis subsp. michiganensis (strain NCPPB 382).